The following is a 349-amino-acid chain: Protein-glutamate methylesterase/protein-glutamine glutaminase (349 aa).

A Response regulatory domain is found at 5-122 (RVLSVDDSAL…REGMLAYSEM (118 aa)). Aspartate 56 bears the 4-aspartylphosphate mark. Residues 152–344 (LLSSEKLIAI…QQMLAKISAG (193 aa)) form the CheB-type methylesterase domain. Active-site residues include serine 164, histidine 190, and aspartate 286.

Belongs to the CheB family. In terms of processing, phosphorylated by CheA. Phosphorylation of the N-terminal regulatory domain activates the methylesterase activity.

Its subcellular location is the cytoplasm. The catalysed reaction is [protein]-L-glutamate 5-O-methyl ester + H2O = L-glutamyl-[protein] + methanol + H(+). It carries out the reaction L-glutaminyl-[protein] + H2O = L-glutamyl-[protein] + NH4(+). Its function is as follows. Involved in chemotaxis. Part of a chemotaxis signal transduction system that modulates chemotaxis in response to various stimuli. Catalyzes the demethylation of specific methylglutamate residues introduced into the chemoreceptors (methyl-accepting chemotaxis proteins or MCP) by CheR. Also mediates the irreversible deamidation of specific glutamine residues to glutamic acid. This is Protein-glutamate methylesterase/protein-glutamine glutaminase from Escherichia coli O6:H1 (strain CFT073 / ATCC 700928 / UPEC).